The following is a 103-amino-acid chain: Large ribosomal subunit protein bL21 (103 aa).

It belongs to the bacterial ribosomal protein bL21 family. As to quaternary structure, part of the 50S ribosomal subunit. Contacts protein L20.

Functionally, this protein binds to 23S rRNA in the presence of protein L20. This is Large ribosomal subunit protein bL21 from Mannheimia succiniciproducens (strain KCTC 0769BP / MBEL55E).